Reading from the N-terminus, the 232-residue chain is Phosphoglycolate phosphatase (232 aa).

Catalysis depends on Asp-13, which acts as the Nucleophile. Residues Asp-13, Asp-15, and Asp-175 each contribute to the Mg(2+) site.

The protein belongs to the HAD-like hydrolase superfamily. CbbY/CbbZ/Gph/YieH family. As to quaternary structure, monomer. Requires Mg(2+) as cofactor. Chloride serves as cofactor.

The enzyme catalyses 2-phosphoglycolate + H2O = glycolate + phosphate. It functions in the pathway organic acid metabolism; glycolate biosynthesis; glycolate from 2-phosphoglycolate: step 1/1. Its function is as follows. Specifically catalyzes the dephosphorylation of 2-phosphoglycolate. Is involved in the dissimilation of the intracellular 2-phosphoglycolate formed during the DNA repair of 3'-phosphoglycolate ends, a major class of DNA lesions induced by oxidative stress. In Yersinia pestis, this protein is Phosphoglycolate phosphatase.